Reading from the N-terminus, the 444-residue chain is DNA repair protein RadA (444 aa).

The segment at 8–25 (CSNCGNISPKWSGQCFDC) adopts a C4-type zinc-finger fold. 89-96 (GDPGIGKS) is a binding site for ATP. A RadA KNRFG motif motif is present at residues 248-252 (KNRFG). The lon-protease-like stretch occupies residues 347–444 (EVYLSIAGGL…HLKDLKEIIK (98 aa)).

Belongs to the RecA family. RadA subfamily.

Functionally, DNA-dependent ATPase involved in processing of recombination intermediates, plays a role in repairing DNA breaks. Stimulates the branch migration of RecA-mediated strand transfer reactions, allowing the 3' invading strand to extend heteroduplex DNA faster. Binds ssDNA in the presence of ADP but not other nucleotides, has ATPase activity that is stimulated by ssDNA and various branched DNA structures, but inhibited by SSB. Does not have RecA's homology-searching function. This is DNA repair protein RadA from Rickettsia conorii (strain ATCC VR-613 / Malish 7).